The chain runs to 176 residues: Translation initiation factor IF-3 (176 aa).

This sequence belongs to the IF-3 family. As to quaternary structure, monomer.

Its subcellular location is the cytoplasm. Functionally, IF-3 binds to the 30S ribosomal subunit and shifts the equilibrium between 70S ribosomes and their 50S and 30S subunits in favor of the free subunits, thus enhancing the availability of 30S subunits on which protein synthesis initiation begins. The chain is Translation initiation factor IF-3 from Streptococcus agalactiae serotype Ia (strain ATCC 27591 / A909 / CDC SS700).